Reading from the N-terminus, the 609-residue chain is NURS complex subunit pir2 (609 aa).

The span at 1–25 shows a compositional bias: basic and acidic residues; that stretch reads MSEVHQESEVEYSRWKRERSPERSQ. Disordered regions lie at residues 1-60 and 187-210; these read MSEV…RASG and EKPS…QLSK. A compositionally biased stretch (low complexity) spans 27–36; it reads RSQSPPGEQS. Ser-28 and Ser-30 each carry phosphoserine. The span at 37-57 shows a compositional bias: basic and acidic residues; sequence AYHRERSPLRKRGNYYDDRTR. Over residues 201–210 the composition is skewed to polar residues; that stretch reads LPSNDPQLSK. The C2H2-type zinc finger occupies 474-499; that stretch reads YRCHVGTCAKLFLGPEFVRKHINKKH.

It belongs to the ARS2 family. In terms of assembly, interacts with ccr4.

Its subcellular location is the nucleus. The chain is NURS complex subunit pir2 from Schizosaccharomyces pombe (strain 972 / ATCC 24843) (Fission yeast).